The primary structure comprises 390 residues: UDP-galactose translocator (390 aa).

The tract at residues 1-24 (MAAVGVGGSTAAAGAGAVSSGALE) is disordered. A run of 10 helical transmembrane segments spans residues 3–23 (AVGV…SGAL), 37–57 (YISL…IRYA), 65–85 (FFAT…CLLL), 97–117 (LVLF…KLAV), 140–160 (TFQV…VLML), 169–189 (WASL…QAGG), 200–220 (GAGL…GVYF), 238–258 (LGLF…GTAV), 269–289 (PAVW…AVVV), and 315–335 (LFGF…IGAV). Low complexity predominate over residues 9–22 (STAAAGAGAVSSGA). The segment at 356-390 (PCIHQQPPGQPPPPQLSSRGDLTTEPFLPKSVLVK) is disordered.

The protein belongs to the nucleotide-sugar transporter family. SLC35A subfamily. In terms of assembly, interacts with SLC35A3; the interaction is reduced in the presence of SLC35A4. Found in a complex with SLC35A3 and SLC35A4.

It is found in the golgi apparatus membrane. It carries out the reaction UMP(out) + UDP-alpha-D-galactose(in) = UMP(in) + UDP-alpha-D-galactose(out). The enzyme catalyses UDP-N-acetyl-alpha-D-galactosamine(in) + UMP(out) = UDP-N-acetyl-alpha-D-galactosamine(out) + UMP(in). The catalysed reaction is UMP(out) + UDP-alpha-D-glucose(in) = UMP(in) + UDP-alpha-D-glucose(out). It catalyses the reaction UMP(out) + UDP-N-acetyl-alpha-D-glucosamine(in) = UMP(in) + UDP-N-acetyl-alpha-D-glucosamine(out). It carries out the reaction UDP-alpha-D-galactose(in) + AMP(out) = UDP-alpha-D-galactose(out) + AMP(in). The enzyme catalyses UDP-alpha-D-galactose(in) + CMP(out) = UDP-alpha-D-galactose(out) + CMP(in). The catalysed reaction is UDP-N-acetyl-alpha-D-galactosamine(out) + UDP-alpha-D-galactose(in) = UDP-N-acetyl-alpha-D-galactosamine(in) + UDP-alpha-D-galactose(out). It catalyses the reaction UDP-N-acetyl-alpha-D-glucosamine(out) + UDP-alpha-D-galactose(in) = UDP-N-acetyl-alpha-D-glucosamine(in) + UDP-alpha-D-galactose(out). It carries out the reaction UDP-alpha-D-galactose(in) + UDP-alpha-D-glucose(out) = UDP-alpha-D-galactose(out) + UDP-alpha-D-glucose(in). The enzyme catalyses UMP(out) + CMP(in) = UMP(in) + CMP(out). The catalysed reaction is UMP(out) + AMP(in) = UMP(in) + AMP(out). Its function is as follows. Transports uridine diphosphate galactose (UDP-galactose) from the cytosol into the Golgi apparatus. It functions as an antiporter that exchanges UDP-galactose for UMP. It is also able to exchange UDP-galactose for AMP and CMP, and to transport UDP-N-acetylgalactosamine (UDP-GalNAc) and other nucleotide sugars. As a provider of UDP-galactose to galactosyltransferases present in the Golgi apparatus, it is necessary for globotriaosylceramide/globoside (Gb3Cer) synthesis from lactosylceramide. This Mus musculus (Mouse) protein is UDP-galactose translocator.